The sequence spans 1460 residues: Probable outer membrane protein PmpC (1460 aa).

The N-terminal stretch at 1 to 20 (MKFLSATAVFAAALPSITSA) is a signal peptide. 5 disordered regions span residues 21–48 (SSVE…FTEI), 92–212 (SEEN…PDKD), 279–372 (TPPA…ESGS), 455–549 (TPEE…DSSI), and 993–1021 (VDTS…TAQA). A compositionally biased stretch (low complexity) spans 34–44 (SSRTGSSSSQS). Positions 97–114 (QASFQDSAQNQTENASEG) are enriched in polar residues. Over residues 115-137 (NSPNSENTNQSSTTETESITTDE) the composition is skewed to low complexity. Residues 138–155 (QVQNDNESAASVPTTVET) are compositionally biased toward polar residues. Low complexity predominate over residues 290–327 (NDPSGSNGNDGSDDSNSSGNTDSNESNPNNSASNNTGS). Polar residues predominate over residues 328 to 358 (ENELSSSTPSAQLPNPATPFLSSVSTNSQPI). A compositionally biased stretch (low complexity) spans 461–471 (LKSSQLNNQNP). Over residues 487–501 (SLETSPITNQDSASS) the composition is skewed to polar residues. 2 stretches are compositionally biased toward low complexity: residues 504–548 (AIFR…SDSS) and 995–1018 (TSTN…STPT). The Autotransporter domain occupies 1167–1460 (DEVAYNNLWI…MINCGARMTF (294 aa)).

Belongs to the PMP outer membrane protein family.

Its subcellular location is the secreted. The protein resides in the cell wall. The protein localises to the cell outer membrane. The sequence is that of Probable outer membrane protein PmpC (pmpC) from Chlamydia muridarum (strain MoPn / Nigg).